The following is a 174-amino-acid chain: NADH-ubiquinone oxidoreductase chain 6 (174 aa).

A run of 6 helical transmembrane segments spans residues 1–21 (MTYVLFLLSVSLVMGFVGFSS), 24–44 (SPIYGGLVLIVSGVVGCTIIL), 47–67 (GGGYMGLMVFLIYLGGMMVVF), 86–106 (VEVLVSVLVGLAMEVGLVLWV), 111–131 (GVVVVVNFNSVGSWMIYEGEG), and 151–171 (WLVVVTGWTLFVGVYIVIEIA).

This sequence belongs to the complex I subunit 6 family. Core subunit of respiratory chain NADH dehydrogenase (Complex I) which is composed of 45 different subunits.

The protein resides in the mitochondrion inner membrane. The catalysed reaction is a ubiquinone + NADH + 5 H(+)(in) = a ubiquinol + NAD(+) + 4 H(+)(out). Core subunit of the mitochondrial membrane respiratory chain NADH dehydrogenase (Complex I) which catalyzes electron transfer from NADH through the respiratory chain, using ubiquinone as an electron acceptor. Essential for the catalytic activity and assembly of complex I. This Pan paniscus (Pygmy chimpanzee) protein is NADH-ubiquinone oxidoreductase chain 6 (MT-ND6).